The following is a 206-amino-acid chain: dITP/XTP pyrophosphatase (206 aa).

7–12 (SSHGYK) provides a ligand contact to substrate. Catalysis depends on D70, which acts as the Proton acceptor. Residue D70 participates in Mg(2+) binding. Substrate-binding positions include T71, 154–157 (FGYD), K177, and 182–183 (HR).

This sequence belongs to the HAM1 NTPase family. In terms of assembly, homodimer. It depends on Mg(2+) as a cofactor.

The catalysed reaction is XTP + H2O = XMP + diphosphate + H(+). It catalyses the reaction dITP + H2O = dIMP + diphosphate + H(+). The enzyme catalyses ITP + H2O = IMP + diphosphate + H(+). Its function is as follows. Pyrophosphatase that catalyzes the hydrolysis of nucleoside triphosphates to their monophosphate derivatives, with a high preference for the non-canonical purine nucleotides XTP (xanthosine triphosphate), dITP (deoxyinosine triphosphate) and ITP. Seems to function as a house-cleaning enzyme that removes non-canonical purine nucleotides from the nucleotide pool, thus preventing their incorporation into DNA/RNA and avoiding chromosomal lesions. This is dITP/XTP pyrophosphatase from Chlamydia abortus (strain DSM 27085 / S26/3) (Chlamydophila abortus).